Reading from the N-terminus, the 473-residue chain is Serine palmitoyltransferase 1 (473 aa).

Residues 1-15 (MATVAEQWVLVEMVQ) are Lumenal-facing. The interval 1–66 (MATVAEQWVL…KEELIEEWQP (66 aa)) is interaction with SPTLC2. Residues 16 to 36 (ALYEAPAYHLILEGILILWII) form a helical membrane-spanning segment. The Cytoplasmic portion of the chain corresponds to 37–473 (RLVFSKTYKL…IREAAQAVLL (437 aa)). Tyrosine 164 carries the phosphotyrosine; by ABL modification.

Belongs to the class-II pyridoxal-phosphate-dependent aminotransferase family. Component of the serine palmitoyltransferase (SPT) complex, which is also composed of SPTLC2 or SPTLC3 and SPTSSA or SPTSSB. The heterodimer with SPTLC2 or SPTLC3 forms the catalytic core of the enzyme, while SPTSSA or SPTSSB subunits determine substrate specificity. SPT also interacts with ORMDL proteins, especially ORMDL3, which negatively regulate SPT activity in the presence of ceramides. Forms dimers of heterodimers with SPTLC2. Interacts with RTN4 (isoform B). Pyridoxal 5'-phosphate serves as cofactor. Post-translationally, phosphorylation at Tyr-164 inhibits activity and promotes cell survival. In terms of tissue distribution, expressed in astrocytes.

The protein localises to the endoplasmic reticulum membrane. It carries out the reaction L-serine + hexadecanoyl-CoA + H(+) = 3-oxosphinganine + CO2 + CoA. The enzyme catalyses octadecanoyl-CoA + L-serine + H(+) = 3-oxoeicosasphinganine + CO2 + CoA. It catalyses the reaction tetradecanoyl-CoA + L-serine + H(+) = 3-oxohexadecasphinganine + CO2 + CoA. The catalysed reaction is dodecanoyl-CoA + L-serine + H(+) = 3-oxotetradecasphinganine + CO2 + CoA. Its pathway is lipid metabolism; sphingolipid metabolism. SPT complex catalytic activity is negatively regulated by ORMDL proteins, including ORMDL3, in the presence of ceramides. This mechanism allows to maintain ceramide levels at sufficient concentrations for the production of complex sphingolipids, but which prevents the accumulation of ceramides to levels that trigger apoptosis. Its function is as follows. Component of the serine palmitoyltransferase multisubunit enzyme (SPT) that catalyzes the initial and rate-limiting step in sphingolipid biosynthesis by condensing L-serine and activated acyl-CoA (most commonly palmitoyl-CoA) to form long-chain bases. The SPT complex is also composed of SPTLC2 or SPTLC3 and SPTSSA or SPTSSB. Within this complex, the heterodimer with SPTLC2 or SPTLC3 forms the catalytic core. The composition of the serine palmitoyltransferase (SPT) complex determines the substrate preference. The SPTLC1-SPTLC2-SPTSSA complex shows a strong preference for C16-CoA substrate, while the SPTLC1-SPTLC3-SPTSSA isozyme uses both C14-CoA and C16-CoA as substrates, with a slight preference for C14-CoA. The SPTLC1-SPTLC2-SPTSSB complex shows a strong preference for C18-CoA substrate, while the SPTLC1-SPTLC3-SPTSSB isozyme displays an ability to use a broader range of acyl-CoAs, without apparent preference. Required for adipocyte cell viability and metabolic homeostasis. This is Serine palmitoyltransferase 1 from Rattus norvegicus (Rat).